A 664-amino-acid chain; its full sequence is Alpha-1,4-glucan:maltose-1-phosphate maltosyltransferase (664 aa).

K261, Q321, and D356 together coordinate alpha-maltose 1-phosphate. The active-site Nucleophile is the D393. N394 provides a ligand contact to alpha-maltose 1-phosphate. E422 (proton donor) is an active-site residue. Residue 533 to 534 (KY) coordinates alpha-maltose 1-phosphate.

It belongs to the glycosyl hydrolase 13 family. GlgE subfamily. As to quaternary structure, homodimer.

It catalyses the reaction alpha-maltose 1-phosphate + [(1-&gt;4)-alpha-D-glucosyl](n) = [(1-&gt;4)-alpha-D-glucosyl](n+2) + phosphate. Its function is as follows. Maltosyltransferase that uses maltose 1-phosphate (M1P) as the sugar donor to elongate linear or branched alpha-(1-&gt;4)-glucans. Is involved in a branched alpha-glucan biosynthetic pathway from trehalose, together with TreS, Mak and GlgB. This is Alpha-1,4-glucan:maltose-1-phosphate maltosyltransferase from Pseudomonas aeruginosa (strain ATCC 15692 / DSM 22644 / CIP 104116 / JCM 14847 / LMG 12228 / 1C / PRS 101 / PAO1).